A 674-amino-acid chain; its full sequence is tRNA-guanine(15) transglycosylase (674 aa).

The active-site Nucleophile is the D90. Positions 125 and 192 each coordinate substrate. C275, C277, and C280 together coordinate Zn(2+). The PUA domain maps to 596-671 (HNRVVVSEDS…QAIKTRKWKK (76 aa)).

Belongs to the archaeosine tRNA-ribosyltransferase family. Zn(2+) serves as cofactor.

It catalyses the reaction guanosine(15) in tRNA + 7-cyano-7-deazaguanine = 7-cyano-7-carbaguanosine(15) in tRNA + guanine. It functions in the pathway tRNA modification; archaeosine-tRNA biosynthesis. Its function is as follows. Exchanges the guanine residue with 7-cyano-7-deazaguanine (preQ0) at position 15 in the dihydrouridine loop (D-loop) of archaeal tRNAs. The polypeptide is tRNA-guanine(15) transglycosylase (Methanosphaera stadtmanae (strain ATCC 43021 / DSM 3091 / JCM 11832 / MCB-3)).